The sequence spans 158 residues: S-ribosylhomocysteine lyase (158 aa).

Residues His54, His58, and Cys124 each coordinate Fe cation.

This sequence belongs to the LuxS family. In terms of assembly, homodimer. Requires Fe cation as cofactor.

It catalyses the reaction S-(5-deoxy-D-ribos-5-yl)-L-homocysteine = (S)-4,5-dihydroxypentane-2,3-dione + L-homocysteine. Functionally, involved in the synthesis of autoinducer 2 (AI-2) which is secreted by bacteria and is used to communicate both the cell density and the metabolic potential of the environment. The regulation of gene expression in response to changes in cell density is called quorum sensing. Catalyzes the transformation of S-ribosylhomocysteine (RHC) to homocysteine (HC) and 4,5-dihydroxy-2,3-pentadione (DPD). This chain is S-ribosylhomocysteine lyase, found in Lactiplantibacillus plantarum (strain ATCC BAA-793 / NCIMB 8826 / WCFS1) (Lactobacillus plantarum).